The chain runs to 497 residues: MSQIPETSDIVLIGAGIMSATLGTVLKELEPSLSVTMLETLHDCGQESSQAWNNAGTGHAANCELNYTPQRPDGSVDITKALEVNTEFDISRQLWAHLVTKGAIPDPRAFLHPCPHMSFVWGDDNVAFLRQRHREMAAHHCYHGMEFSEDSAQIAAWAPLIIEGRKPGQPIAATRIISGADVDYGALTHLLVKQLQAQSGFSVHYKHRVVALARGDDGRWLVTVENVASAERTTISARFVFAGAGGGALDILQKSGIPEGNGYAGFPVSGIWLRCDVDDISVRHHAKVYGKAAHGSPPMSVPHLDTRIIGGKRSLLFGPYAGFSSKFLKHGSYADLLRSIEPGNILPMLAVARDDWQLSEYLIGQVLQTSEHQFAALQGFFPRAQREDWQRAVAGQRVQIIKPDPQHTGVLEFGTELVASADNSFVALLGASPGASTAAFIAMEVLQKCFDDRLTPDGWLGALKQMIPTYGIDLKQDAAACRDSRARTAKVLQLDFV.

Belongs to the MQO family. FAD is required as a cofactor.

The catalysed reaction is (S)-malate + a quinone = a quinol + oxaloacetate. It functions in the pathway carbohydrate metabolism; tricarboxylic acid cycle; oxaloacetate from (S)-malate (quinone route): step 1/1. The protein is Probable malate:quinone oxidoreductase of Rhodopseudomonas palustris (strain ATCC BAA-98 / CGA009).